A 147-amino-acid polypeptide reads, in one-letter code: Nucleoside diphosphate kinase (147 aa).

Residues Lys11, Phe59, Arg87, Thr93, Arg104, and Asn114 each coordinate ATP. Residue His117 is the Pros-phosphohistidine intermediate of the active site.

This sequence belongs to the NDK family. It depends on Mg(2+) as a cofactor.

It localises to the cytoplasm. The catalysed reaction is a 2'-deoxyribonucleoside 5'-diphosphate + ATP = a 2'-deoxyribonucleoside 5'-triphosphate + ADP. It carries out the reaction a ribonucleoside 5'-diphosphate + ATP = a ribonucleoside 5'-triphosphate + ADP. Major role in the synthesis of nucleoside triphosphates other than ATP. The ATP gamma phosphate is transferred to the NDP beta phosphate via a ping-pong mechanism, using a phosphorylated active-site intermediate. The protein is Nucleoside diphosphate kinase of Sulfurisphaera tokodaii (strain DSM 16993 / JCM 10545 / NBRC 100140 / 7) (Sulfolobus tokodaii).